We begin with the raw amino-acid sequence, 604 residues long: Elongation factor 4 (604 aa).

Residues 7–190 (SRLRNFCIIA…IVDRVPAPPD (184 aa)) form the tr-type G domain. Residues 19–24 (DHGKST) and 136–139 (NKID) each bind GTP.

The protein belongs to the TRAFAC class translation factor GTPase superfamily. Classic translation factor GTPase family. LepA subfamily.

The protein localises to the cell inner membrane. It carries out the reaction GTP + H2O = GDP + phosphate + H(+). Required for accurate and efficient protein synthesis under certain stress conditions. May act as a fidelity factor of the translation reaction, by catalyzing a one-codon backward translocation of tRNAs on improperly translocated ribosomes. Back-translocation proceeds from a post-translocation (POST) complex to a pre-translocation (PRE) complex, thus giving elongation factor G a second chance to translocate the tRNAs correctly. Binds to ribosomes in a GTP-dependent manner. This Synechococcus sp. (strain RCC307) protein is Elongation factor 4.